The following is a 237-amino-acid chain: Phosphoribosylaminoimidazole-succinocarboxamide synthase (237 aa).

Belongs to the SAICAR synthetase family.

The catalysed reaction is 5-amino-1-(5-phospho-D-ribosyl)imidazole-4-carboxylate + L-aspartate + ATP = (2S)-2-[5-amino-1-(5-phospho-beta-D-ribosyl)imidazole-4-carboxamido]succinate + ADP + phosphate + 2 H(+). It functions in the pathway purine metabolism; IMP biosynthesis via de novo pathway; 5-amino-1-(5-phospho-D-ribosyl)imidazole-4-carboxamide from 5-amino-1-(5-phospho-D-ribosyl)imidazole-4-carboxylate: step 1/2. This is Phosphoribosylaminoimidazole-succinocarboxamide synthase from Methanosarcina mazei (strain ATCC BAA-159 / DSM 3647 / Goe1 / Go1 / JCM 11833 / OCM 88) (Methanosarcina frisia).